Consider the following 90-residue polypeptide: U7-theraphotoxin-Hhn1c (90 aa).

A signal peptide spans 1 to 19; sequence MKTAIFTVVLALAVFAVLS. Positions 20-50 are excised as a propeptide; that stretch reads FGWEANEKALSEEFTELIHEKEAASETEARE. Intrachain disulfides connect Cys-51–Cys-65, Cys-58–Cys-70, and Cys-64–Cys-81.

The protein belongs to the neurotoxin 10 (Hwtx-1) family. 13 (Hntx-13) subfamily. In terms of tissue distribution, expressed by the venom gland.

It localises to the secreted. Functionally, ion channel inhibitor. The chain is U7-theraphotoxin-Hhn1c from Cyriopagopus hainanus (Chinese bird spider).